The primary structure comprises 308 residues: F-actin-capping protein subunit alpha (308 aa).

This sequence belongs to the F-actin-capping protein alpha subunit family. Component of the F-actin capping complex, composed of a heterodimer of an alpha and a beta subunit.

In terms of biological role, F-actin-capping proteins bind in a Ca(2+)-independent manner to the fast growing ends of actin filaments (barbed end) thereby blocking the exchange of subunits at these ends. Unlike other capping proteins (such as gelsolin and severin), these proteins do not sever actin filaments. In Arabidopsis thaliana (Mouse-ear cress), this protein is F-actin-capping protein subunit alpha.